We begin with the raw amino-acid sequence, 347 residues long: MRVIKRNLRGDEGEISLVAESLDDLWHLKHLVSPGDLVFATTQRKISGATDKLRPEKAERRTVRLGISVEAVEFHTYSNWLRIHGVIKSGVDIGSYHTLNIEAGSELSIIKRWRPDELQRIEEAVAESNRPRVVLALVEEGEATIGVLRQFGVQTVAEIRGGSGKGSGSSVRDDFLKEVADQIANSAGDDAYVVLAGPGFTKEDLRKVMEARYPDLLKRLTMDDASSTGRSGFQEVLRRGTVDRIVEASRISRETRLMDDLMKEIATDGRAAYGIREVREAANYGAIETLMIVDQLVRRGDVESLIRDVAAGRGRVVIFSTEFEPGERLEALGGVAALLRFRIPGAS.

It belongs to the eukaryotic release factor 1 family. Pelota subfamily. In terms of assembly, monomer. It depends on a divalent metal cation as a cofactor.

The protein localises to the cytoplasm. In terms of biological role, may function in recognizing stalled ribosomes, interact with stem-loop structures in stalled mRNA molecules, and effect endonucleolytic cleavage of the mRNA. May play a role in the release non-functional ribosomes and degradation of damaged mRNAs. Has endoribonuclease activity. The protein is Protein pelota homolog of Methanothrix thermoacetophila (strain DSM 6194 / JCM 14653 / NBRC 101360 / PT) (Methanosaeta thermophila).